The primary structure comprises 137 residues: MPPKAADKKPANKAPATASKAPEKKDAGKKTAASGEKKKRTKARKETYSSYIYKVLKQVHPDTGISNRAMSILNSFVNDIFERVATEASKLAAYNKKSTISSREIQTSVRLILPGELAKHAVSEGTKAVTKYSSSTK.

Residues 1 to 10 (MPPKAADKKP) show a composition bias toward basic and acidic residues. Residues 1 to 45 (MPPKAADKKPANKAPATASKAPEKKDAGKKTAASGEKKKRTKARK) are disordered. K8 and K9 each carry N6-acetyllysine; alternate. Glycyl lysine isopeptide (Lys-Gly) (interchain with G-Cter in SUMO); alternate cross-links involve residues K8 and K9. Position 13 is an N6-acetyllysine (K13). K24 carries the N6-acetyllysine; alternate modification. Residue K24 forms a Glycyl lysine isopeptide (Lys-Gly) (interchain with G-Cter in SUMO); alternate linkage. K25 is covalently cross-linked (Glycyl lysine isopeptide (Lys-Gly) (interchain with G-Cter in SUMO)). A Glycyl lysine isopeptide (Lys-Gly) (interchain with G-Cter in ubiquitin) cross-link involves residue K131.

The protein belongs to the histone H2B family. The nucleosome is a histone octamer containing two molecules each of H2A, H2B, H3 and H4 assembled in one H3-H4 heterotetramer and two H2A-H2B heterodimers. The octamer wraps approximately 147 bp of DNA. Post-translationally, monoubiquitinated to form H2BK123ub1. H2BK123ub1 gives a specific tag for epigenetic transcriptional activation and is also prerequisite for H3K4me and H3K79me formation. H2BK123ub1 also modulates the formation of double-strand breaks during meiosis and is a prerequisite for DNA-damage checkpoint activation. In terms of processing, acetylated by GCN5 to form H2BK11ac and H2BK16ac. H2BK16ac can also be formed by ESA1. Acetylation of N-terminal lysines and particularly formation of H2BK11acK16ac has a positive effect on transcription. Sumoylation to form H2BK6su or H2BK7su, and probably also H2BK16su or H2BK17su, occurs preferentially near the telomeres and represses gene transcription.

The protein resides in the nucleus. Its subcellular location is the chromosome. In terms of biological role, core component of nucleosome. Nucleosomes wrap and compact DNA into chromatin, limiting DNA accessibility to the cellular machineries which require DNA as a template. Histones thereby play a central role in transcription regulation, DNA repair, DNA replication and chromosomal stability. DNA accessibility is regulated via a complex set of post-translational modifications of histones, also called histone code, and nucleosome remodeling. The chain is Histone H2B (HTB1) from Podospora anserina (Pleurage anserina).